A 509-amino-acid chain; its full sequence is ATP synthase subunit alpha (509 aa).

Gly169 to Thr176 provides a ligand contact to ATP.

This sequence belongs to the ATPase alpha/beta chains family. F-type ATPases have 2 components, CF(1) - the catalytic core - and CF(0) - the membrane proton channel. CF(1) has five subunits: alpha(3), beta(3), gamma(1), delta(1), epsilon(1). CF(0) has four main subunits: a(1), b(1), b'(1) and c(9-12).

It is found in the cell inner membrane. The enzyme catalyses ATP + H2O + 4 H(+)(in) = ADP + phosphate + 5 H(+)(out). Functionally, produces ATP from ADP in the presence of a proton gradient across the membrane. The alpha chain is a regulatory subunit. The sequence is that of ATP synthase subunit alpha from Erythrobacter litoralis (strain HTCC2594).